The sequence spans 377 residues: Queuine tRNA-ribosyltransferase (377 aa).

The active-site Proton acceptor is aspartate 89. Residues 89–93, aspartate 143, glutamine 187, and glycine 214 each bind substrate; that span reads DSGGF. Residues 245 to 251 are RNA binding; it reads GVGKPED. Aspartate 264 (nucleophile) is an active-site residue. Residues 269–273 form an RNA binding; important for wobble base 34 recognition region; sequence TRNAR. 4 residues coordinate Zn(2+): cysteine 302, cysteine 304, cysteine 307, and histidine 333.

This sequence belongs to the queuine tRNA-ribosyltransferase family. As to quaternary structure, homodimer. Within each dimer, one monomer is responsible for RNA recognition and catalysis, while the other monomer binds to the replacement base PreQ1. It depends on Zn(2+) as a cofactor.

It carries out the reaction 7-aminomethyl-7-carbaguanine + guanosine(34) in tRNA = 7-aminomethyl-7-carbaguanosine(34) in tRNA + guanine. It functions in the pathway tRNA modification; tRNA-queuosine biosynthesis. In terms of biological role, catalyzes the base-exchange of a guanine (G) residue with the queuine precursor 7-aminomethyl-7-deazaguanine (PreQ1) at position 34 (anticodon wobble position) in tRNAs with GU(N) anticodons (tRNA-Asp, -Asn, -His and -Tyr). Catalysis occurs through a double-displacement mechanism. The nucleophile active site attacks the C1' of nucleotide 34 to detach the guanine base from the RNA, forming a covalent enzyme-RNA intermediate. The proton acceptor active site deprotonates the incoming PreQ1, allowing a nucleophilic attack on the C1' of the ribose to form the product. After dissociation, two additional enzymatic reactions on the tRNA convert PreQ1 to queuine (Q), resulting in the hypermodified nucleoside queuosine (7-(((4,5-cis-dihydroxy-2-cyclopenten-1-yl)amino)methyl)-7-deazaguanosine). In Shewanella halifaxensis (strain HAW-EB4), this protein is Queuine tRNA-ribosyltransferase.